A 651-amino-acid chain; its full sequence is Beta-glucuronidase (651 aa).

A signal peptide spans 1–22 (MARGSAVAWAALGPLLWGCALG). N-linked (GlcNAc...) asparagine glycosylation is found at Asn173, Asn272, and Asn420. Glu451 (proton donor) is an active-site residue. Asn631 is a glycosylation site (N-linked (GlcNAc...) asparagine).

It belongs to the glycosyl hydrolase 2 family. Homotetramer. Post-translationally, N-linked glycosylated with 3 to 4 oligosaccharide chains.

It is found in the lysosome. The catalysed reaction is a beta-D-glucuronoside + H2O = D-glucuronate + an alcohol. Inhibited by L-aspartic acid. In terms of biological role, plays an important role in the degradation of dermatan and keratan sulfates. The chain is Beta-glucuronidase (GUSB) from Homo sapiens (Human).